Reading from the N-terminus, the 301-residue chain is Probable alpha-L-glutamate ligase (301 aa).

One can recognise an ATP-grasp domain in the interval 104–287 (LQLLSRRGVG…IASQIIAFIE (184 aa)). ATP contacts are provided by residues K141, 178 to 179 (EF), D187, and 211 to 213 (RSN). Residues D248, E260, and N262 each contribute to the Mg(2+) site. The Mn(2+) site is built by D248, E260, and N262.

This sequence belongs to the RimK family. Requires Mg(2+) as cofactor. Mn(2+) is required as a cofactor.

In Hydrogenovibrio crunogenus (strain DSM 25203 / XCL-2) (Thiomicrospira crunogena), this protein is Probable alpha-L-glutamate ligase.